The primary structure comprises 85 residues: Small ribosomal subunit protein uS17 (85 aa).

It belongs to the universal ribosomal protein uS17 family. As to quaternary structure, part of the 30S ribosomal subunit.

Its function is as follows. One of the primary rRNA binding proteins, it binds specifically to the 5'-end of 16S ribosomal RNA. The sequence is that of Small ribosomal subunit protein uS17 from Geobacter metallireducens (strain ATCC 53774 / DSM 7210 / GS-15).